The sequence spans 159 residues: uncharacterized protein (159 aa).

The N-acetyltransferase domain maps to 7–151 (LLINYKTLEE…NPLIWEPAHI (145 aa)).

This is an uncharacterized protein from Bacillus pumilus (strain SAFR-032).